A 605-amino-acid chain; its full sequence is Glucose oxidase (605 aa).

An N-terminal signal peptide occupies residues 1–18; it reads MVSVFLSTLLLAAATVQA. L52, T53, and E73 together coordinate FAD. N111 is a glycosylation site (N-linked (GlcNAc...) asparagine). Residues S125, N129, G130, and S132 each coordinate FAD. Residues N183 and N190 are each glycosylated (N-linked (GlcNAc...) asparagine). An intrachain disulfide couples C186 to C228. V272 is an FAD binding site. 4 N-linked (GlcNAc...) asparagine glycosylation sites follow: N335, N375, N410, and N519. The active-site Proton acceptor is the H538. 2 residues coordinate O2: K559 and V560. The FAD site is built by G571 and M583.

The protein belongs to the GMC oxidoreductase family. In terms of assembly, homodimer. FAD serves as cofactor.

It is found in the secreted. The protein localises to the cell wall. Its subcellular location is the cytoplasmic vesicle. It carries out the reaction beta-D-glucose + O2 = D-glucono-1,5-lactone + H2O2. Its function is as follows. Glucose oxidase catalyzes the oxidation of beta-D-glucose to D-glucono-delta-lactone and hydrogen peroxide in the presence of molecular oxygen. D-glucono-delta-lactone is sequentially hydrolyzed by lactonase to D-gluconic acid, and the resulting hydrogen peroxide is hydrolyzed by catalase to oxygen and water. Glucose oxidase alone indirectly causes toxicity in the presence of glucose and is the active compound of the antifungal antibiotic talaron. Responsible for inhibition of germination of microsclerotia of Verticillium dahliae. This chain is Glucose oxidase, found in Talaromyces flavus.